Consider the following 373-residue polypeptide: Alpha-N-acetylgalactosaminide alpha-2,6-sialyltransferase 2 (373 aa).

Topologically, residues 1-6 (MDLPRR) are cytoplasmic. A helical; Signal-anchor for type II membrane protein transmembrane segment spans residues 7–27 (WLFRMLLLVATSSGILLMLYS). Topologically, residues 28–373 (SAGQQSPETQ…NAGILWLYQR (346 aa)) are lumenal. 2 disulfides stabilise this stretch: cysteine 65–cysteine 147 and cysteine 150–cysteine 316. The N-linked (GlcNAc...) asparagine glycan is linked to asparagine 103. Asparagine 155 contributes to the CMP-N-acetyl-beta-neuraminate binding site. Asparagine 160 carries N-linked (GlcNAc...) asparagine glycosylation. CMP-N-acetyl-beta-neuraminate-binding residues include asparagine 178, serine 303, and histidine 335.

This sequence belongs to the glycosyltransferase 29 family. Highly expressed in lactating mammary gland and adult testis. Lower levels in kidney.

The protein localises to the golgi apparatus membrane. It carries out the reaction a beta-D-galactosyl-(1-&gt;3)-N-acetyl-alpha-D-galactosaminyl derivative + CMP-N-acetyl-beta-neuraminate = a beta-D-galactosyl-(1-&gt;3)-[N-acetyl-alpha-neuraminyl-(2-&gt;6)]-N-acetyl-alpha-D-galactosaminyl derivative + CMP + H(+). The catalysed reaction is a 3-O-[N-acetyl-alpha-D-galactosaminyl]-L-threonyl-[protein] + CMP-N-acetyl-beta-neuraminate = a 3-O-[N-acetyl-alpha-neuraminosyl-(2-&gt;6)-N-acetyl-alpha-D-galactosaminyl]-L-threonyl-[protein] + CMP + H(+). The enzyme catalyses a 3-O-[N-acetyl-alpha-neuraminyl-(2-&gt;3)-beta-D-galactosyl-(1-&gt;3)-N-acetyl-alpha-D-galactosaminyl]-L-threonyl-[protein] + CMP-N-acetyl-beta-neuraminate = a 3-O-{alpha-Neu5Ac-(2-&gt;3)-beta-D-Gal-(1-&gt;3)-[alpha-Neu5Ac-(2-&gt;6)]-alpha-D-GalNAc}-L-threonyl-[protein] + CMP + H(+). The protein operates within protein modification; protein glycosylation. In terms of biological role, catalyzes the transfer of N-acetylneuraminyl groups onto glycan chains in glycoproteins. Conjugates sialic acid with an alpha-2-6 linkage to N-acetylgalactosamine (GalNAc) glycan chains linked to serine or threonine in glycoproteins. Sialylates alphaGalNAc- and Galbeta1-&gt;3GalNAc-O-Ser/Thr epitopes also known as Tn and T antigens. The sequence is that of Alpha-N-acetylgalactosaminide alpha-2,6-sialyltransferase 2 (St6galnac2) from Mus musculus (Mouse).